The sequence spans 205 residues: Regulator of G-protein signaling 4 (205 aa).

3 S-palmitoyl cysteine lipidation sites follow: C2, C12, and C95. The 117-residue stretch at 62-178 (SLENLISHEC…LKSRFYLDLV (117 aa)) folds into the RGS domain.

In terms of processing, palmitoylated on Cys-2 and/or Cys-12. Phosphorylated by cyclic GMP-dependent protein kinase.

Functionally, inhibits signal transduction by increasing the GTPase activity of G protein alpha subunits thereby driving them into their inactive GDP-bound form. Activity on G(z)-alpha is inhibited by phosphorylation of the G-protein. Activity on G(z)-alpha and G(i)-alpha-1 is inhibited by palmitoylation of the G-protein. This chain is Regulator of G-protein signaling 4 (RGS4), found in Pongo abelii (Sumatran orangutan).